A 447-amino-acid polypeptide reads, in one-letter code: Pyruvate kinase (447 aa).

Arginine 33 contacts substrate. Residues asparagine 35, serine 37, and aspartate 61 each coordinate K(+). Position 35-38 (35-38 (NMSH)) interacts with ATP. Arginine 68 is an ATP binding site. A Mg(2+)-binding site is contributed by glutamate 203. Residues glycine 226, aspartate 227, and threonine 259 each coordinate substrate. Aspartate 227 contributes to the Mg(2+) binding site.

The protein belongs to the pyruvate kinase family. Homotetramer. Mg(2+) serves as cofactor. It depends on K(+) as a cofactor.

It carries out the reaction pyruvate + ATP = phosphoenolpyruvate + ADP + H(+). Its pathway is carbohydrate degradation; glycolysis; pyruvate from D-glyceraldehyde 3-phosphate: step 5/5. The protein is Pyruvate kinase of Methanocaldococcus jannaschii (strain ATCC 43067 / DSM 2661 / JAL-1 / JCM 10045 / NBRC 100440) (Methanococcus jannaschii).